The chain runs to 181 residues: uncharacterized protein (181 aa).

The tract at residues 25–47 (ELANEVSAGDEEPYDDDIWESED) is disordered. Residues 32–47 (AGDEEPYDDDIWESED) show a composition bias toward acidic residues. The chain crosses the membrane as a helical span at residues 149–169 (ILTLILLSCGLLMLFIGYPIL).

It localises to the cytoplasm. It is found in the membrane. This is an uncharacterized protein from Schizosaccharomyces pombe (strain 972 / ATCC 24843) (Fission yeast).